The chain runs to 137 residues: Nucleoside diphosphate kinase (137 aa).

ATP is bound by residues Lys-9, Phe-57, Arg-85, Thr-91, Arg-102, and Asn-112. His-115 serves as the catalytic Pros-phosphohistidine intermediate.

Belongs to the NDK family. Homotetramer. Mg(2+) is required as a cofactor.

It is found in the cytoplasm. It carries out the reaction a 2'-deoxyribonucleoside 5'-diphosphate + ATP = a 2'-deoxyribonucleoside 5'-triphosphate + ADP. The catalysed reaction is a ribonucleoside 5'-diphosphate + ATP = a ribonucleoside 5'-triphosphate + ADP. Its function is as follows. Major role in the synthesis of nucleoside triphosphates other than ATP. The ATP gamma phosphate is transferred to the NDP beta phosphate via a ping-pong mechanism, using a phosphorylated active-site intermediate. This chain is Nucleoside diphosphate kinase, found in Leptospira interrogans serogroup Icterohaemorrhagiae serovar Lai (strain 56601).